Here is a 137-residue protein sequence, read N- to C-terminus: Ribosome-binding factor A (137 aa).

Belongs to the RbfA family. In terms of assembly, monomer. Binds 30S ribosomal subunits, but not 50S ribosomal subunits or 70S ribosomes.

The protein localises to the cytoplasm. One of several proteins that assist in the late maturation steps of the functional core of the 30S ribosomal subunit. Associates with free 30S ribosomal subunits (but not with 30S subunits that are part of 70S ribosomes or polysomes). Required for efficient processing of 16S rRNA. May interact with the 5'-terminal helix region of 16S rRNA. The sequence is that of Ribosome-binding factor A from Shewanella amazonensis (strain ATCC BAA-1098 / SB2B).